Consider the following 121-residue polypeptide: Small ribosomal subunit protein uS13 (121 aa).

Residues histidine 91–lysine 121 form a disordered region.

The protein belongs to the universal ribosomal protein uS13 family. Part of the 30S ribosomal subunit. Forms a loose heterodimer with protein S19. Forms two bridges to the 50S subunit in the 70S ribosome.

In terms of biological role, located at the top of the head of the 30S subunit, it contacts several helices of the 16S rRNA. In the 70S ribosome it contacts the 23S rRNA (bridge B1a) and protein L5 of the 50S subunit (bridge B1b), connecting the 2 subunits; these bridges are implicated in subunit movement. Contacts the tRNAs in the A and P-sites. This chain is Small ribosomal subunit protein uS13, found in Staphylococcus aureus (strain Mu3 / ATCC 700698).